The primary structure comprises 724 residues: 4-alpha-glucanotransferase (724 aa).

This sequence belongs to the disproportionating enzyme family.

The protein resides in the cytoplasm. The enzyme catalyses Transfers a segment of a (1-&gt;4)-alpha-D-glucan to a new position in an acceptor, which may be glucose or a (1-&gt;4)-alpha-D-glucan.. This chain is 4-alpha-glucanotransferase (malQ), found in Mycobacterium bovis (strain ATCC BAA-935 / AF2122/97).